The following is a 364-amino-acid chain: MGVTGILQLPRDRFKRTSFFLWVIILFQRTFSIPLGVIHNSTLQVSDVDKLVCRDKLSSTNQLRSVGLNLEGNGVATDVPSATKRWGFRSGVPPKVVNYEAGEWAENCYNLEIKKPDGSECLPAAPDGIRGFPRCRYVHKVSGTGPCAGDFAFHKEGAFFLYDRLASTVIYRGTTFAEGVVAFLILPQAKKDFFSSHPLREPVNATEDPSSGYYSTTIRYQATGFGTNETEYLFEVDNLTYVQLESRFTPQFLLQLNETIYTSGKRSNTTGKLIWKVNPEIDTTIGEWAFWETKKTSLEKFAVKSCLSQLYQTEPKTSVVRVRRELLPTQGPTQQLKTTKSWLQKIPLQWFKCTVKEGKLQCRI.

Positions 1 to 32 are cleaved as a signal peptide; the sequence is MGVTGILQLPRDRFKRTSFFLWVIILFQRTFS. An N-linked (GlcNAc...) asparagine; by host glycan is attached at Asn-40. 2 disulfide bridges follow: Cys-108-Cys-135 and Cys-121-Cys-147. Asn-204, Asn-228, Asn-238, Asn-257, and Asn-268 each carry an N-linked (GlcNAc...) asparagine; by host glycan.

Belongs to the filoviruses glycoprotein family. In terms of assembly, homodimer; disulfide-linked. The homodimers are linked by two disulfide bonds in a parallel orientation. Monomer. Post-translationally, this precursor is processed into mature sGP and delta-peptide by host furin or furin-like proteases. The cleavage site corresponds to the furin optimal cleavage sequence [KR]-X-[KR]-R. N-glycosylated. In terms of processing, O-glycosylated.

It is found in the secreted. In terms of biological role, seems to possess an anti-inflammatory activity as it can reverse the barrier-decreasing effects of TNF alpha. Might therefore contribute to the lack of inflammatory reaction seen during infection in spite the of extensive necrosis and massive virus production. Does not seem to be involved in activation of primary macrophages. Does not seem to interact specifically with neutrophils. Its function is as follows. Viroporin that permeabilizes mammalian cell plasma membranes. It acts by altering permeation of ionic compounds and small molecules. This activity may lead to viral enterotoxic activity. In Epomops franqueti (Franquet's epauletted fruit bat), this protein is Pre-small/secreted glycoprotein (GP).